The sequence spans 157 residues: RNA-binding protein 3 (157 aa).

Residues Gly-6–Lys-84 form the RRM domain. An Omega-N-methylarginine modification is found at Arg-47. The interval His-81 to Asn-157 is disordered. The residue at position 105 (Arg-105) is an Asymmetric dimethylarginine; alternate. Arg-105 carries the dimethylated arginine; in A2780 ovarian carcinoma cell line modification. Arg-105 carries the post-translational modification Omega-N-methylarginine; alternate. A compositionally biased stretch (gly residues) spans Arg-105 to Ser-114. Residues Arg-121 and Arg-131 each carry the omega-N-methylarginine modification. Ser-147 is modified (phosphoserine). Tyr-155 bears the Phosphotyrosine mark.

As to quaternary structure, interacts with RPL4. Associates with the 60S ribosomal subunits in an RNA-independent manner. Associates with ribosomes. Arg-105 is dimethylated, probably to asymmetric dimethylarginine. In terms of processing, phosphorylated.

Its subcellular location is the nucleus. The protein localises to the cytoplasm. It is found in the cell projection. The protein resides in the dendrite. In terms of biological role, cold-inducible mRNA binding protein that enhances global protein synthesis at both physiological and mild hypothermic temperatures. Reduces the relative abundance of microRNAs, when overexpressed. Enhances phosphorylation of translation initiation factors and active polysome formation. This chain is RNA-binding protein 3 (RBM3), found in Homo sapiens (Human).